A 168-amino-acid polypeptide reads, in one-letter code: Protein C2-DOMAIN ABA-RELATED 3 (168 aa).

The region spanning 1 to 106 is the C2 domain; that stretch reads MSLMDNLLGI…IEALRMELSG (106 aa). Positions 24, 25, 30, 76, 77, 78, and 84 each coordinate Ca(2+).

It belongs to the plant CAR protein family. As to quaternary structure, binds to PYR/PYL/RCAR abscisic acid intracellular receptors in an ABA-independent manner, both at the plasma membrane and in the nucleus. Requires Ca(2+) as cofactor.

It is found in the cell membrane. The protein localises to the nucleus. Its function is as follows. Stimulates the GTPase/ATPase activities of Obg-like ATPases. Mediates the transient calcium-dependent interaction of PYR/PYL/RCAR abscisic acid (ABA) receptors with the plasma membrane and thus regulates ABA sensitivity. The polypeptide is Protein C2-DOMAIN ABA-RELATED 3 (Arabidopsis thaliana (Mouse-ear cress)).